We begin with the raw amino-acid sequence, 126 residues long: Profilin-1B (126 aa).

Residues Ser-2 to Phe-36 form an actin binding region. Lys-104 carries the N6,N6,N6-trimethyllysine modification.

The protein belongs to the profilin family. Occurs in many kinds of cells as a complex with monomeric actin in a 1:1 ratio.

It localises to the cytoplasm. The protein resides in the cytoskeleton. Binds to actin and affects the structure of the cytoskeleton. At high concentrations, profilin prevents the polymerization of actin, whereas it enhances it at low concentrations. By binding to PIP2, it inhibits the formation of IP3 and DG. The sequence is that of Profilin-1B from Acanthamoeba castellanii (Amoeba).